We begin with the raw amino-acid sequence, 498 residues long: ATP synthase subunit beta, chloroplastic (498 aa).

172–179 (GGAGVGKT) lines the ATP pocket.

The protein belongs to the ATPase alpha/beta chains family. F-type ATPases have 2 components, CF(1) - the catalytic core - and CF(0) - the membrane proton channel. CF(1) has five subunits: alpha(3), beta(3), gamma(1), delta(1), epsilon(1). CF(0) has four main subunits: a(1), b(1), b'(1) and c(9-12).

The protein resides in the plastid. It localises to the chloroplast thylakoid membrane. It catalyses the reaction ATP + H2O + 4 H(+)(in) = ADP + phosphate + 5 H(+)(out). Functionally, produces ATP from ADP in the presence of a proton gradient across the membrane. The catalytic sites are hosted primarily by the beta subunits. This Illicium oligandrum (Star anise) protein is ATP synthase subunit beta, chloroplastic.